Here is a 217-residue protein sequence, read N- to C-terminus: UPF0502 protein ASA_1460 (217 aa).

Belongs to the UPF0502 family.

The polypeptide is UPF0502 protein ASA_1460 (Aeromonas salmonicida (strain A449)).